The following is a 430-amino-acid chain: MSKLKKVIGDVDVNKGLLFLLTIGGLYSLGIALSNTFVNVYLWKQSGKFIDLAIYNLSIVTMQPITFYLAGRLAKKIDRVFILRFGVIFLAAFYLSVLLAGETAASRLVLIGAVLGVGYGFYWLAFNVLTFEITEPDTRDFFNGFMGILSSSAGMIGPIVAGFVISRLENNTGYTVIFSLSLSLFALAVVMSFFLKRRESKGRFMLSKVFGERHSNMNWRRITNAHFFQGLREGIFVFLISVFVFIETNSELALGTFGLVNSAVSFFAYYFASRLIKKKARKKSILLGGLILYGALFLILFHMSFSTLLTYGVFIAIGYPLLLVPYVSLTYDVIGRARHARKARIEYIVLREMFLNAGRIVSILCFLLIVALLKEDVGIPLSLAILGIGHPLIYYFVKDIRFKEKEGENETMEEDGQKRVTEPTLLKGER.

A run of 12 helical transmembrane segments spans residues 18–38, 49–69, 80–100, 109–129, 145–165, 175–195, 235–255, 256–276, 285–305, 307–327, 353–373, and 377–397; these read LFLLTIGGLYSLGIALSNTFV, FIDLAIYNLSIVTMQPITFYL, VFILRFGVIFLAAFYLSVLLA, VLIGAVLGVGYGFYWLAFNVL, FMGILSSSAGMIGPIVAGFVI, TVIFSLSLSLFALAVVMSFFL, IFVFLISVFVFIETNSELALG, TFGLVNSAVSFFAYYFASRLI, ILLGGLILYGALFLILFHMSF, TLLTYGVFIAIGYPLLLVPYV, MFLNAGRIVSILCFLLIVALL, and VGIPLSLAILGIGHPLIYYFV. Residues 407 to 430 are disordered; sequence GENETMEEDGQKRVTEPTLLKGER. Residues 415–430 show a composition bias toward basic and acidic residues; it reads DGQKRVTEPTLLKGER.

It is found in the cell membrane. This is an uncharacterized protein from Bacillus subtilis (strain 168).